The sequence spans 219 residues: Proteasome subunit beta type-9 (219 aa).

The propeptide at 1 to 20 (MLRAGAPTAGSFRTEEVHTG) is removed in mature form. Catalysis depends on T21, which acts as the Nucleophile. N6-acetyllysine is present on residues K53 and K109.

It belongs to the peptidase T1B family. The 26S proteasome consists of a 20S proteasome core and two 19S regulatory subunits. The 20S proteasome core is composed of 28 subunits that are arranged in four stacked rings, resulting in a barrel-shaped structure. The two end rings are each formed by seven alpha subunits, and the two central rings are each formed by seven beta subunits. The catalytic chamber with the active sites is on the inside of the barrel. Component of the immunoproteasome, where it displaces the equivalent housekeeping subunit PSMB6. Component of the spermatoproteasome, a form of the proteasome specifically found in testis. Autocleaved. The resulting N-terminal Thr residue of the mature subunit is responsible for the nucleophile proteolytic activity.

The protein localises to the cytoplasm. It localises to the nucleus. The enzyme catalyses Cleavage of peptide bonds with very broad specificity.. Functionally, the proteasome is a multicatalytic proteinase complex which is characterized by its ability to cleave peptides with Arg, Phe, Tyr, Leu, and Glu adjacent to the leaving group at neutral or slightly basic pH. The proteasome has an ATP-dependent proteolytic activity. This subunit is involved in antigen processing to generate class I binding peptides. This chain is Proteasome subunit beta type-9 (Psmb9), found in Mus musculus bactrianus (Southwestern Asian house mouse).